The chain runs to 135 residues: Small ribosomal subunit protein uS17 (135 aa).

The tract at residues 1 to 59 is disordered; it reads MAEAKTGAKAAPRVAKAAKAAPKKAAPNDAEAIGAANAANVKGPKHTPRTPKPRGRRKT. A compositionally biased stretch (low complexity) spans 8 to 42; that stretch reads AKAAPRVAKAAKAAPKKAAPNDAEAIGAANAANVK. Over residues 43-59 the composition is skewed to basic residues; sequence GPKHTPRTPKPRGRRKT.

This sequence belongs to the universal ribosomal protein uS17 family. In terms of assembly, part of the 30S ribosomal subunit.

In terms of biological role, one of the primary rRNA binding proteins, it binds specifically to the 5'-end of 16S ribosomal RNA. The protein is Small ribosomal subunit protein uS17 of Mycobacterium bovis (strain ATCC BAA-935 / AF2122/97).